A 373-amino-acid polypeptide reads, in one-letter code: MTEVLWPAAPNGTDAAFLASPGFHWGNSTATSTAAAAAPFRCALTKTGFQFYYLPAVYIVVFIIGFLGNSIAIWMFVFHMKPWSGISVYMFNLALADFLYVLTLPALIFYYFNKTNWIFGDAMCKLQRFIFHVNLYGSILFLTCISAHRYSGVVYPLKSLGRLKKKNAVYISVLVWLIVVVAISPILFYSGTGIRKNKTITCYDTTSDEYLRSYFIYSMCTTVAMFCVPLVLILGCYGLIVRALIYKDLDNSPLRRKSIYLVIIVLTVFAVSYIPFHVMKTMNLRARLDFQTPEMCTFNDRVYATYQVTRGLASLNSCVDPILYFLAGDTFRRRLSRATRKASRRSEANLQSKSEDMTLNILSEFKQNGDTSL.

Residues 1–51 (MTEVLWPAAPNGTDAAFLASPGFHWGNSTATSTAAAAAPFRCALTKTGFQF) lie on the Extracellular side of the membrane. Residues Asn-11 and Asn-27 are each glycosylated (N-linked (GlcNAc...) asparagine). Disulfide bonds link Cys-42-Cys-296 and Cys-124-Cys-202. An ADP-binding site is contributed by Lys-46. A helical transmembrane segment spans residues 52–74 (YYLPAVYIVVFIIGFLGNSIAIW). The Cytoplasmic portion of the chain corresponds to 75 to 87 (MFVFHMKPWSGIS). A helical membrane pass occupies residues 88-109 (VYMFNLALADFLYVLTLPALIF). The Extracellular portion of the chain corresponds to 110-125 (YYFNKTNWIFGDAMCK). Asn-113 carries an N-linked (GlcNAc...) asparagine glycan. The helical transmembrane segment at 126-147 (LQRFIFHVNLYGSILFLTCISA) threads the bilayer. Residues 148 to 166 (HRYSGVVYPLKSLGRLKKK) lie on the Cytoplasmic side of the membrane. A helical membrane pass occupies residues 167 to 188 (NAVYISVLVWLIVVVAISPILF). Topologically, residues 189-214 (YSGTGIRKNKTITCYDTTSDEYLRSY) are extracellular. Asn-197 carries an N-linked (GlcNAc...) asparagine glycan. 203–205 (YDT) lines the ADP pocket. A helical transmembrane segment spans residues 215-237 (FIYSMCTTVAMFCVPLVLILGCY). At 238 to 260 (GLIVRALIYKDLDNSPLRRKSIY) the chain is on the cytoplasmic side. Residues 261 to 284 (LVIIVLTVFAVSYIPFHVMKTMNL) traverse the membrane as a helical segment. ADP is bound by residues 283-287 (NLRAR), 303-306 (YATY), and Arg-310. The Extracellular segment spans residues 285-303 (RARLDFQTPEMCTFNDRVY). The chain crosses the membrane as a helical span at residues 304–325 (ATYQVTRGLASLNSCVDPILYF). Residues 326-373 (LAGDTFRRRLSRATRKASRRSEANLQSKSEDMTLNILSEFKQNGDTSL) lie on the Cytoplasmic side of the membrane.

It belongs to the G-protein coupled receptor 1 family.

The protein localises to the cell membrane. Functionally, receptor for extracellular adenine nucleotides such as ADP. In platelets, binding to ADP leads to mobilization of intracellular calcium ions via activation of phospholipase C, a change in platelet shape, and ultimately platelet aggregation. The polypeptide is P2Y purinoceptor 1 (P2RY1) (Cavia porcellus (Guinea pig)).